Reading from the N-terminus, the 161-residue chain is Eukaryotic translation initiation factor 5A-2 (161 aa).

A Hypusine modification is found at K54.

The protein belongs to the eIF-5A family. In terms of processing, lys-54 undergoes hypusination, a unique post-translational modification that consists in the addition of a butylamino group from spermidine to lysine side chain and leads to the formation of a hypusine residue. eIF-5As are the only known proteins to undergo this modification, which is essential for their function. As to expression, expressed in the somatic tissues.

The protein localises to the cytoplasm. Its function is as follows. Translation factor that promotes translation elongation and termination, particularly upon ribosome stalling at specific amino acid sequence contexts. Binds between the exit (E) and peptidyl (P) site of the ribosome and promotes rescue of stalled ribosome: specifically required for efficient translation of polyproline-containing peptides as well as other motifs that stall the ribosome. Acts as a ribosome quality control (RQC) cofactor by joining the RQC complex to facilitate peptidyl transfer during CAT tailing step. Acts in somatic tissues and its function in the soma is essential for normal growth and reproduction. This is Eukaryotic translation initiation factor 5A-2 (iff-2) from Caenorhabditis elegans.